The primary structure comprises 141 residues: Large ribosomal subunit protein uL14 (141 aa).

It belongs to the universal ribosomal protein uL14 family. As to quaternary structure, part of the 50S ribosomal subunit. Forms a cluster with proteins L3 and L24e, part of which may contact the 16S rRNA in 2 intersubunit bridges.

Functionally, binds to 23S rRNA. Forms part of two intersubunit bridges in the 70S ribosome. The sequence is that of Large ribosomal subunit protein uL14 from Pyrococcus horikoshii (strain ATCC 700860 / DSM 12428 / JCM 9974 / NBRC 100139 / OT-3).